The sequence spans 861 residues: Leucine--tRNA ligase (861 aa).

The short motif at 42–52 is the 'HIGH' region element; that stretch reads PYPSGRLHMGH. The 'KMSKS' region motif lies at 619–623; sequence KMSKS. Lysine 622 provides a ligand contact to ATP.

The protein belongs to the class-I aminoacyl-tRNA synthetase family.

It localises to the cytoplasm. It catalyses the reaction tRNA(Leu) + L-leucine + ATP = L-leucyl-tRNA(Leu) + AMP + diphosphate. This chain is Leucine--tRNA ligase, found in Haemophilus influenzae (strain PittEE).